Consider the following 299-residue polypeptide: Dihydroorotate dehydrogenase B (NAD(+)), catalytic subunit (299 aa).

Residues Ser-19 and 43-44 (KS) contribute to the FMN site. Substrate is bound by residues Lys-43, 67 to 71 (NAMGL), and Asn-121. Asn-121 is an FMN binding site. Catalysis depends on Cys-124, which acts as the Nucleophile. The FMN site is built by Lys-159 and Ile-185. Substrate is bound at residue 186 to 187 (NT). FMN is bound by residues Gly-211, 237 to 238 (GG), and 259 to 260 (GT).

This sequence belongs to the dihydroorotate dehydrogenase family. Type 1 subfamily. Heterotetramer of 2 PyrK and 2 PyrD type B subunits. The cofactor is FMN.

Its subcellular location is the cytoplasm. It carries out the reaction (S)-dihydroorotate + NAD(+) = orotate + NADH + H(+). The protein operates within pyrimidine metabolism; UMP biosynthesis via de novo pathway; orotate from (S)-dihydroorotate (NAD(+) route): step 1/1. In terms of biological role, catalyzes the conversion of dihydroorotate to orotate with NAD(+) as electron acceptor. The chain is Dihydroorotate dehydrogenase B (NAD(+)), catalytic subunit (pyrD) from Pyrococcus abyssi (strain GE5 / Orsay).